A 201-amino-acid polypeptide reads, in one-letter code: Adenylyl-sulfate kinase (201 aa).

35–42 (GLSGSGKS) is a binding site for ATP. The active-site Phosphoserine intermediate is the Ser-109.

The protein belongs to the APS kinase family.

The catalysed reaction is adenosine 5'-phosphosulfate + ATP = 3'-phosphoadenylyl sulfate + ADP + H(+). Its pathway is sulfur metabolism; hydrogen sulfide biosynthesis; sulfite from sulfate: step 2/3. Its function is as follows. Catalyzes the synthesis of activated sulfate. The chain is Adenylyl-sulfate kinase from Salmonella paratyphi C (strain RKS4594).